A 492-amino-acid polypeptide reads, in one-letter code: Glycerol kinase (492 aa).

Position 11 (T11) interacts with ADP. ATP-binding residues include T11 and T12. T11 contributes to the sn-glycerol 3-phosphate binding site. K15 contributes to the ADP binding site. R79, E80, Y129, and D238 together coordinate sn-glycerol 3-phosphate. Positions 79, 80, 129, 238, and 239 each coordinate glycerol. ADP-binding residues include T260, G302, G403, and N407. ATP-binding residues include T260, G302, and G403.

Belongs to the FGGY kinase family.

The enzyme catalyses glycerol + ATP = sn-glycerol 3-phosphate + ADP + H(+). It participates in polyol metabolism; glycerol degradation via glycerol kinase pathway; sn-glycerol 3-phosphate from glycerol: step 1/1. Inhibited by fructose 1,6-bisphosphate (FBP). Its function is as follows. Key enzyme in the regulation of glycerol uptake and metabolism. Catalyzes the phosphorylation of glycerol to yield sn-glycerol 3-phosphate. This chain is Glycerol kinase, found in Aquifex aeolicus (strain VF5).